The sequence spans 375 residues: 23S rRNA (uracil(747)-C(5))-methyltransferase RlmC (375 aa).

The [4Fe-4S] cluster site is built by Cys3, Cys11, Cys14, and Cys87. Residues Gln212, Phe241, Glu262, and Asn307 each contribute to the S-adenosyl-L-methionine site. The active-site Nucleophile is Cys334.

This sequence belongs to the class I-like SAM-binding methyltransferase superfamily. RNA M5U methyltransferase family. RlmC subfamily.

The enzyme catalyses uridine(747) in 23S rRNA + S-adenosyl-L-methionine = 5-methyluridine(747) in 23S rRNA + S-adenosyl-L-homocysteine + H(+). Catalyzes the formation of 5-methyl-uridine at position 747 (m5U747) in 23S rRNA. This is 23S rRNA (uracil(747)-C(5))-methyltransferase RlmC from Escherichia coli (strain SMS-3-5 / SECEC).